We begin with the raw amino-acid sequence, 877 residues long: Probable linoleate 9S-lipoxygenase 4 (877 aa).

Residues 38–165 (GDFHASLLDG…NYQYERVFFA (128 aa)) enclose the PLAT domain. Residues 168-877 (TYLPSKMPAP…AMGIPNSISI (710 aa)) form the Lipoxygenase domain. Residues 229 to 252 (GSQELPYPRRGRTGRAPTKTDPNT) are disordered. Fe cation is bound by residues histidine 528, histidine 533, histidine 719, asparagine 723, and isoleucine 877.

It belongs to the lipoxygenase family. Fe cation is required as a cofactor.

It carries out the reaction (9Z,12Z)-octadecadienoate + O2 = (9S)-hydroperoxy-(10E,12Z)-octadecadienoate. It functions in the pathway lipid metabolism; oxylipin biosynthesis. Its function is as follows. Plant lipoxygenase may be involved in a number of diverse aspects of plant physiology including growth and development, pest resistance, and senescence or responses to wounding. Catalyzes the hydroperoxidation of lipids containing a cis,cis-1,4-pentadiene structure. This Oryza sativa subsp. japonica (Rice) protein is Probable linoleate 9S-lipoxygenase 4.